A 58-amino-acid chain; its full sequence is uncharacterized protein (58 aa).

A helical membrane pass occupies residues 5 to 27 (FLHANITIIPHSVLYVSLSYYII).

The protein localises to the membrane. This is an uncharacterized protein from Saccharomyces cerevisiae (strain ATCC 204508 / S288c) (Baker's yeast).